The following is a 648-amino-acid chain: SRSF protein kinase 1 (648 aa).

Positions 1-57 are disordered; sequence MERKVLALQARKKRTKAKKDKAQRKPETQHRGSAPHSESDIPEQEEEILGSDDDEQE. Over residues 10–22 the composition is skewed to basic residues; sequence ARKKRTKAKKDKA. The span at 40–57 shows a compositional bias: acidic residues; the sequence is DIPEQEEEILGSDDDEQE. Ser-51 bears the Phosphoserine mark. A Protein kinase domain is found at 80 to 646; the sequence is YHVIRKLGWG…AAECLRHPWL (567 aa). ATP is bound by residues 86–94 and Lys-109; that span reads LGWGHFSTV. Asp-213 functions as the Proton acceptor in the catalytic mechanism. Disordered stretches follow at residues 238–354 and 395–464; these read WQRS…APEI and PSFL…DSKG. Residues 265–276 are compositionally biased toward basic residues; sequence KNKKKKLKKKQK. 2 stretches are compositionally biased toward basic and acidic residues: residues 277–288 and 304–317; these read RQAELLEKRMQE and NKQEESESPVDRPL. Residues Ser-309, Ser-311, and Ser-333 each carry the phosphoserine modification. Composition is skewed to polar residues over residues 333 to 343 and 396 to 441; these read SNSIGQDQTLT and SFLN…TQLE. Residue Thr-448 is modified to Phosphothreonine. Residue Ser-450 is modified to Phosphoserine. Ser-548 carries the post-translational modification Phosphoserine; by CK2.

This sequence belongs to the protein kinase superfamily. CMGC Ser/Thr protein kinase family. As to quaternary structure, monomer. Found in a multisubunit complex containing seven proteins, named toposome, which separates entangled circular chromatin DNA during chromosome segregation. Interacts with HHV-1 ICP27 protein. Interacts with DNAJC8 and AHSA1/AHA1 and this mediates formation of a complex with the Hsp70 /Hsp90 machinery. Binds to IGF2BP1, SYNCRIP, HNRNPA2B1 and HNRNPC. Interacts with SAFB/SAFB1 and SAFB2 which inhibits its activity. The cofactor is Mg(2+). Predominantly expressed in the testis but is also present at lower levels in heart, spleen, liver, brain, kidney, lung and skeletal muscle. Present in all germinal cells in the seminiferous tubules but not in mature spermatozoa.

Its subcellular location is the cytoplasm. The protein resides in the nucleus. It is found in the nucleoplasm. It localises to the nucleus matrix. The protein localises to the microsome. Its subcellular location is the nucleus speckle. The protein resides in the chromosome. The catalysed reaction is L-seryl-[protein] + ATP = O-phospho-L-seryl-[protein] + ADP + H(+). The enzyme catalyses L-threonyl-[protein] + ATP = O-phospho-L-threonyl-[protein] + ADP + H(+). With respect to regulation, activated by phosphorylation on Ser-51 and Ser-548. Serine/arginine-rich protein-specific kinase which specifically phosphorylates its substrates at serine residues located in regions rich in arginine/serine dipeptides, known as RS domains and is involved in the phosphorylation of SR splicing factors and the regulation of splicing. Plays a central role in the regulatory network for splicing, controlling the intranuclear distribution of splicing factors in interphase cells and the reorganization of nuclear speckles during mitosis. Can influence additional steps of mRNA maturation, as well as other cellular activities, such as chromatin reorganization in somatic and sperm cells and cell cycle progression. Phosphorylates SFRS2, ZRSR2, LBR and PRM1. Phosphorylates SRSF1 using a directional (C-terminal to N-terminal) and a dual-track mechanism incorporating both processive phosphorylation (in which the kinase stays attached to the substrate after each round of phosphorylation) and distributive phosphorylation steps (in which the kinase and substrate dissociate after each phosphorylation event). The RS domain of SRSF1 binds first to a docking groove in the large lobe of the kinase domain of SRPK1. This induces certain structural changes in SRPK1 and/or RRM2 domain of SRSF1, allowing RRM2 to bind the kinase and initiate phosphorylation. The cycles continue for several phosphorylation steps in a processive manner (steps 1-8) until the last few phosphorylation steps (approximately steps 9-12). During that time, a mechanical stress induces the unfolding of the beta-4 motif in RRM2, which then docks at the docking groove of SRPK1. This also signals RRM2 to begin to dissociate, which facilitates SRSF1 dissociation after phosphorylation is completed. Can mediate hepatitis B virus (HBV) core protein phosphorylation. It plays a negative role in the regulation of HBV replication through a mechanism not involving the phosphorylation of the core protein but by reducing the packaging efficiency of the pregenomic RNA (pgRNA) without affecting the formation of the viral core particles. Can induce splicing of exon 10 in MAPT/TAU. In Mus musculus (Mouse), this protein is SRSF protein kinase 1.